The following is an 89-amino-acid chain: Small ribosomal subunit protein uS15 (89 aa).

It belongs to the universal ribosomal protein uS15 family. As to quaternary structure, part of the 30S ribosomal subunit. Forms a bridge to the 50S subunit in the 70S ribosome, contacting the 23S rRNA.

Its function is as follows. One of the primary rRNA binding proteins, it binds directly to 16S rRNA where it helps nucleate assembly of the platform of the 30S subunit by binding and bridging several RNA helices of the 16S rRNA. Functionally, forms an intersubunit bridge (bridge B4) with the 23S rRNA of the 50S subunit in the ribosome. The polypeptide is Small ribosomal subunit protein uS15 (Caulobacter sp. (strain K31)).